Consider the following 264-residue polypeptide: Small ribosomal subunit protein eS1 (264 aa).

A disordered region spans residues 233 to 264; that stretch reads GEGGGAGKPAGDETGAKVERADGYEPPVQESV. The span at 242-255 shows a compositional bias: basic and acidic residues; it reads AGDETGAKVERADG.

Belongs to the eukaryotic ribosomal protein eS1 family. Component of the small ribosomal subunit. Mature ribosomes consist of a small (40S) and a large (60S) subunit. The 40S subunit contains about 33 different proteins and 1 molecule of RNA (18S). The 60S subunit contains about 49 different proteins and 3 molecules of RNA (28S, 5.8S and 5S). Part of the small subunit (SSU) processome, composed of more than 70 proteins and the RNA chaperone small nucleolar RNA (snoRNA) U3.

The protein resides in the cytoplasm. It is found in the nucleus. The protein localises to the nucleolus. In terms of biological role, component of the small ribosomal subunit. The ribosome is a large ribonucleoprotein complex responsible for the synthesis of proteins in the cell. Part of the small subunit (SSU) processome, first precursor of the small eukaryotic ribosomal subunit. During the assembly of the SSU processome in the nucleolus, many ribosome biogenesis factors, an RNA chaperone and ribosomal proteins associate with the nascent pre-rRNA and work in concert to generate RNA folding, modifications, rearrangements and cleavage as well as targeted degradation of pre-ribosomal RNA by the RNA exosome. May play a role during erythropoiesis. The chain is Small ribosomal subunit protein eS1 (rps3a) from Xenopus tropicalis (Western clawed frog).